Reading from the N-terminus, the 1337-residue chain is Partitioning defective 3 homolog (1337 aa).

Residue S25 is modified to Phosphoserine. 2 disordered regions span residues 81 to 109 (EQDPHHGGDGTSASSTGTQSPEIFGSELG) and 143 to 263 (SSDP…LENM). At T91 the chain carries Phosphothreonine. Residues 91 to 100 (TSASSTGTQS) show a composition bias toward low complexity. 2 stretches are compositionally biased toward polar residues: residues 150 to 163 (GLSTSVSDNNFSSE) and 171 to 188 (TRWSTTAGFLKQNTTGSP). S156 and S174 each carry phosphoserine. Basic and acidic residues predominate over residues 190-203 (TCDRKKDENYRSLP). The span at 207–224 (SSWSNQFQRDNARSSLSA) shows a compositional bias: polar residues. The 89-residue stretch at 271 to 359 (MVKLVQVPND…ARVIWFHVVP (89 aa)) folds into the PDZ 1 domain. Residue S383 is modified to Phosphoserine. The tract at residues 397–441 (NAPQALPRAPRLSQPPEQLDAHPRLPHSAHASTKPPTAPALAPPN) is disordered. PDZ domains follow at residues 461 to 546 (NIQL…LVFR) and 590 to 677 (EVPL…GMIQ). Y489 is subject to Phosphotyrosine. Phosphoserine occurs at positions 692, 695, 715, 728, 809, and 827. The tract at residues 712–936 (RRISHSLYSG…AAIDKSYDKP (225 aa)) is interaction with PRKCI and PRKCZ. K834 carries the N6-acetyllysine modification. At S837 the chain carries Phosphoserine. K851 bears the N6-acetyllysine mark. 2 positions are modified to phosphoserine: S852 and S873. 5 disordered regions span residues 866-888 (VDDQRAGSPNRDVGPSLGLKKSS), 932-1015 (SYDK…AKKG), 1028-1055 (KHRKDDKMEKMGRIKIQDSFTSEEDRVR), 1110-1271 (LNAR…LGGH), and 1284-1337 (LLRQ…PFYS). Residue K885 is modified to N6-acetyllysine. An interaction with FRMD4A region spans residues 935–1337 (KPMVDDDDEG…TPEKGRPFYS (403 aa)). Residues 939-953 (DDDDEGMETLEEDTE) show a composition bias toward acidic residues. At S962 the chain carries Phosphoserine; by AURKA. Phosphoserine is present on residues S971 and S973. Basic and acidic residues-rich tracts occupy residues 981-1009 (DPEKRDKAEKKKDKAGKDKKKDREKEKDK) and 1030-1043 (RKDDKMEKMGRIKI). S1046 carries the phosphoserine modification. Positions 1050-1082 (EEDRVRMKEEQERIQAKTREFRERQARERDYAE) form a coiled coil. The segment covering 1138 to 1147 (PGDSNRSTPS) has biased composition (polar residues). Over residues 1148 to 1175 (NHDRIQRLRQEFQQAKQDEDVEDRRRTY) the composition is skewed to basic and acidic residues. Coiled-coil stretches lie at residues 1149–1172 (HDRIQRLRQEFQQAKQDEDVEDRR), 1199–1222 (VQVQRQRQEERESFQQAQRQYSSL), and 1278–1299 (MLETQELLRQEQRRKEQQLKKQ). Low complexity predominate over residues 1180–1203 (SWSSSRPASQSGRHSVSVEVQVQR). The segment covering 1219–1240 (YSSLPRQSRKNASSVSQDSWEQ) has biased composition (polar residues). The segment covering 1284–1296 (LLRQEQRRKEQQL) has biased composition (basic and acidic residues). The segment covering 1318-1327 (SQVARLNRLQ) has biased composition (polar residues). The segment covering 1328–1337 (TPEKGRPFYS) has biased composition (basic and acidic residues). K1331 bears the N6-acetyllysine mark.

This sequence belongs to the PAR3 family. Component of a complex whose core is composed of ARHGAP17, AMOT, PALS1, PATJ and PARD3/PAR3. Interacts (via PDZ 1 domain) with PARD6A, PARD6B and F11R/JAM1. Interacts with AURKA, AURKB and SIRT2. Interacts with PRKCI. Interacts with PRKCZ. Part of a complex with PARD6A or PARD6B, PRKCI or PRKCZ and CDC42 or RAC1. Interacts with LIMK2 and CDH5. Component of the Par polarity complex, composed of at least phosphorylated PRKCZ, PARD3 and TIAM1. Directly interacts with TIAM1 and TIAM2. Interacts with ECT2 and FBF1. Interacts (via PDZ 3 domain) with PTEN (via C-terminus). Interacts (via coiled-coil domain) with FRMD4A. Found in a complex with PARD3, CYTH1 and FRMD4A. Interacts with SAPCD2. Interacts with PRKCA. As to quaternary structure, interacts with PRKCZ. Acetylated. Deacetylated by SIRT2, thereby inhibiting Schwann cell peripheral myelination. Post-translationally, phosphorylation at Ser-827 by PRKCZ and PRKCI occurs at the most apical tip of epithelial cell-cell contacts during the initial phase of tight junction formation and may promote dissociation of the complex with PARD6. EGF-induced Tyr-1127 phosphorylation mediates dissociation from LIMK2. Phosphorylation by AURKA at Ser-962 is required for the normal establishment of neuronal polarity. As to expression, isoform 1 is predominantly expressed in lung, glandular stomach, prostate, ovary and uterus. Isoform 1 is also expressed in brain, with a high expression in the cortex, hippocampus and in the striatum. Isoform 2 is predominantly expressed in intestinal epithelial cells, kidney and prostate.

The protein resides in the cytoplasm. It localises to the endomembrane system. The protein localises to the cell junction. It is found in the tight junction. Its subcellular location is the adherens junction. The protein resides in the cell cortex. It localises to the cytoskeleton. The protein localises to the cell membrane. Functionally, adapter protein involved in asymmetrical cell division and cell polarization processes. Seems to play a central role in the formation of epithelial tight junctions. Association with PARD6B may prevent the interaction of PARD3 with F11R/JAM1, thereby preventing tight junction assembly. The PARD6-PARD3 complex links GTP-bound Rho small GTPases to atypical protein kinase C proteins. Required for establishment of neuronal polarity and normal axon formation in cultured hippocampal neurons. Involved in Schwann cell peripheral myelination. Targets the phosphatase PTEN to cell junctions. The polypeptide is Partitioning defective 3 homolog (Pard3) (Rattus norvegicus (Rat)).